Reading from the N-terminus, the 450-residue chain is MTRKYFGTDGVRGRVGQSPITPDFVMRLGYSAGKALLGRSEMPAGDRPAVLIGKDTRLSGYMLESALEAGFSAAGVEVCLVGPLPTPAVAYLTRALRLQAGIVISASHNPYYDNGIKFFSAQGTKLPDEVERAIEAGIDQPMVCAPPADLGRVRRIEDARGRYIEFCKSTFPNDLDLRGLKIVIDCAHGAAYHIAPSVFHELGADVVSIGVQPNGLNINDAVGATAPKALCEAVLANRADLGIALDGDADRLQMVDAEGNLYDGDQLLYAIVRSRARSAPVKGVAGTLMSNLALEHALAKLNIPFARAAVGDRYVVEMLSEKGWLFGGENSGHILALDRHTTGDGIVAALQVLAALRELGGSLKELLGGLVLYPQKLINVPVMRGFPWKEHPAITSALADTEVSLQGRGRVLLRASGTEPLLRVMVEGEDAVEVTYAAEKLAAVVRESAQ.

S107 acts as the Phosphoserine intermediate in catalysis. 4 residues coordinate Mg(2+): S107, D246, D248, and D250. Residue S107 is modified to Phosphoserine.

It belongs to the phosphohexose mutase family. It depends on Mg(2+) as a cofactor. In terms of processing, activated by phosphorylation.

The enzyme catalyses alpha-D-glucosamine 1-phosphate = D-glucosamine 6-phosphate. Functionally, catalyzes the conversion of glucosamine-6-phosphate to glucosamine-1-phosphate. This chain is Phosphoglucosamine mutase, found in Dechloromonas aromatica (strain RCB).